The primary structure comprises 258 residues: HVA22-like protein j (258 aa).

The segment at 153-258 (AANQPPTERN…RSNSRTQPAA (106 aa)) is disordered. Residues 156–169 (QPPTERNVNMNAQS) show a composition bias toward polar residues. Residues 206–215 (WPPPTPPPTP) show a composition bias toward pro residues.

It belongs to the DP1 family.

The polypeptide is HVA22-like protein j (HVA22J) (Arabidopsis thaliana (Mouse-ear cress)).